The following is a 257-amino-acid chain: 5'-nucleotidase SurE (257 aa).

4 residues coordinate a divalent metal cation: D8, D9, S40, and N92.

This sequence belongs to the SurE nucleotidase family. Requires a divalent metal cation as cofactor.

The protein localises to the cytoplasm. The catalysed reaction is a ribonucleoside 5'-phosphate + H2O = a ribonucleoside + phosphate. Nucleotidase that shows phosphatase activity on nucleoside 5'-monophosphates. The chain is 5'-nucleotidase SurE from Rhizobium leguminosarum bv. trifolii (strain WSM2304).